A 630-amino-acid chain; its full sequence is tRNA uridine 5-carboxymethylaminomethyl modification enzyme MnmG (630 aa).

13–18 (GGGHAG) provides a ligand contact to FAD. 273–287 (GPRYCPSIEDKIHRF) contacts NAD(+).

This sequence belongs to the MnmG family. Homodimer. Heterotetramer of two MnmE and two MnmG subunits. Requires FAD as cofactor.

It localises to the cytoplasm. Its function is as follows. NAD-binding protein involved in the addition of a carboxymethylaminomethyl (cmnm) group at the wobble position (U34) of certain tRNAs, forming tRNA-cmnm(5)s(2)U34. The polypeptide is tRNA uridine 5-carboxymethylaminomethyl modification enzyme MnmG (Pseudomonas entomophila (strain L48)).